Here is a 2284-residue protein sequence, read N- to C-terminus: RNA1 polyprotein (2284 aa).

The Cytoplasmic portion of the chain corresponds to 569 to 1171 (CTAEEIFRMH…QVVVENYSLL (603 aa)). Positions 751–919 (VSKLEEVHAR…DGSFFTPRAY (169 aa)) constitute an SF3 helicase domain. An ATP-binding site is contributed by 781-788 (GASQSGKT). The chain crosses the membrane as a helical span at residues 1172–1192 (LTLVAILLLISAAYTLLSTVV). At 1193-1217 (ALAGCSSFAGGMVAVTAVNNASIPC) the chain is on the lumenal side. Ser-1218 bears the O-(5'-phospho-RNA)-serine mark. One can recognise a Peptidase C3 domain in the interval 1243–1458 (GPSKGQGEHE…SVIPNYSSSF (216 aa)). Active-site for picornain 3C-like protease activity residues include His-1284, Glu-1328, and Cys-1420. A RdRp catalytic domain is found at 1728–1852 (DVGYNCDYKA…TVAQSVMQYF (125 aa)).

Post-translationally, specific enzymatic cleavages by picornain 3C-like protease in vivo yield mature proteins. Picornain 3C-like protease is autocatalytically processed. VPg is uridylylated by the polymerase and is covalently linked to the 5'-end of genomic RNA. This uridylylated form acts as a nucleotide-peptide primer for the polymerase.

It localises to the host endoplasmic reticulum lumen. The protein localises to the host endoplasmic reticulum membrane. The enzyme catalyses RNA(n) + a ribonucleoside 5'-triphosphate = RNA(n+1) + diphosphate. Picornain 3C-like protease is a thiol protease that cleaves the P1 and P2 polyproteins. The protein is RNA1 polyprotein of Vitis rupestris (Grape).